Here is a 275-residue protein sequence, read N- to C-terminus: Probable ABC transporter permease protein PH1216 (275 aa).

6 helical membrane-spanning segments follow: residues 10–30, 73–93, 105–125, 137–157, 181–203, and 241–261; these read LLYI…WSAI, IFTT…GFTI, LLAL…IPLV, ILGL…LLFT, IYTK…YQFT, and IQMA…IALG. In terms of domain architecture, ABC transmembrane type-1 spans 68-260; sequence ILNSLIFTTF…LPTLLIMIAL (193 aa).

It belongs to the binding-protein-dependent transport system permease family. MalFG subfamily.

It is found in the cell membrane. Functionally, probably part of a binding-protein-dependent transport system PH1214/15/16. Probably responsible for the translocation of the substrate across the membrane. The sequence is that of Probable ABC transporter permease protein PH1216 from Pyrococcus horikoshii (strain ATCC 700860 / DSM 12428 / JCM 9974 / NBRC 100139 / OT-3).